Here is a 653-residue protein sequence, read N- to C-terminus: Macrolide export ATP-binding/permease protein MacB (653 aa).

The region spanning 6–244 (LALSHICREF…AAASLPADKP (239 aa)) is the ABC transporter domain. 42–49 (GSSGSGKS) is an ATP binding site. 4 helical membrane-spanning segments follow: residues 277 to 297 (FLTMLGIIIGIAAVSSVVALG), 526 to 546 (LAFLVAAIAVISLVVGGIGVM), 587 to 607 (LGGIAGILIAVALGALLNLLL), and 617 to 637 (FSIGAAFLTSTAIGIFFGYFP).

The protein belongs to the ABC transporter superfamily. Macrolide exporter (TC 3.A.1.122) family. In terms of assembly, homodimer.

The protein resides in the cell inner membrane. In terms of biological role, non-canonical ABC transporter that contains transmembrane domains (TMD), which form a pore in the inner membrane, and an ATP-binding domain (NBD), which is responsible for energy generation. Confers resistance against macrolides. This Bradyrhizobium diazoefficiens (strain JCM 10833 / BCRC 13528 / IAM 13628 / NBRC 14792 / USDA 110) protein is Macrolide export ATP-binding/permease protein MacB.